A 1055-amino-acid chain; its full sequence is Error-prone DNA polymerase (1055 aa).

The protein belongs to the DNA polymerase type-C family. DnaE2 subfamily.

The protein localises to the cytoplasm. The catalysed reaction is DNA(n) + a 2'-deoxyribonucleoside 5'-triphosphate = DNA(n+1) + diphosphate. DNA polymerase involved in damage-induced mutagenesis and translesion synthesis (TLS). It is not the major replicative DNA polymerase. This Corynebacterium glutamicum (strain ATCC 13032 / DSM 20300 / JCM 1318 / BCRC 11384 / CCUG 27702 / LMG 3730 / NBRC 12168 / NCIMB 10025 / NRRL B-2784 / 534) protein is Error-prone DNA polymerase.